The primary structure comprises 442 residues: Histidine--tRNA ligase (442 aa).

It belongs to the class-II aminoacyl-tRNA synthetase family. As to quaternary structure, homodimer.

Its subcellular location is the cytoplasm. The catalysed reaction is tRNA(His) + L-histidine + ATP = L-histidyl-tRNA(His) + AMP + diphosphate + H(+). The sequence is that of Histidine--tRNA ligase from Psychrobacter arcticus (strain DSM 17307 / VKM B-2377 / 273-4).